A 275-amino-acid polypeptide reads, in one-letter code: NADPH-dependent 7-cyano-7-deazaguanine reductase (275 aa).

A substrate-binding site is contributed by 81–83 (VES). 83–84 (SK) lines the NADPH pocket. Catalysis depends on Cys-182, which acts as the Thioimide intermediate. The Proton donor role is filled by Asp-189. 221–222 (HE) serves as a coordination point for substrate. 250 to 251 (RG) contacts NADPH.

The protein belongs to the GTP cyclohydrolase I family. QueF type 2 subfamily. As to quaternary structure, homodimer.

It is found in the cytoplasm. It carries out the reaction 7-aminomethyl-7-carbaguanine + 2 NADP(+) = 7-cyano-7-deazaguanine + 2 NADPH + 3 H(+). Its pathway is tRNA modification; tRNA-queuosine biosynthesis. Catalyzes the NADPH-dependent reduction of 7-cyano-7-deazaguanine (preQ0) to 7-aminomethyl-7-deazaguanine (preQ1). The polypeptide is NADPH-dependent 7-cyano-7-deazaguanine reductase (Polaromonas sp. (strain JS666 / ATCC BAA-500)).